The sequence spans 997 residues: Glutamate [NMDA] receptor subunit 1 (997 aa).

The signal sequence occupies residues 1–26 (MAVAGFVFCRPLFGLAIVLLVAPIDA). The Extracellular portion of the chain corresponds to 27 to 573 (AQRHTASDNP…TLVSFLQPFS (547 aa)). 7 N-linked (GlcNAc...) asparagine glycosylation sites follow: Asn-258, Asn-314, Asn-345, Asn-397, Asn-454, Asn-481, and Asn-501. Residues 530-532 (PLT) and Arg-537 each bind glycine. The chain crosses the membrane as a helical span at residues 574–594 (NTLWILVMVSVHVVALVLYLL). At 595–651 (DRFSPFGRFKLSHSDSNEEKALNLSSAVWFAWGVLLNSGIGEGTPRSFSARVLGMVW) the chain is on the cytoplasmic side. Residues 652 to 672 (AGFAMIIVASYTANLAAFLVL) traverse the membrane as a helical segment. Over 673–831 (ERPKTKLSGI…KTPNTLGLKN (159 aa)) the chain is Extracellular. N-linked (GlcNAc...) asparagine glycosylation occurs at Asn-693. Positions 703 and 747 each coordinate glycine. A helical membrane pass occupies residues 832–852 (MAGVFILVGVGIAGGVGLIII). Over 853–997 (EVIYKKHQVK…YTSDVSHLVV (145 aa)) the chain is Cytoplasmic. Residues 970-997 (LGKTRPQQSVLPPRYSPGYTSDVSHLVV) form a disordered region. Positions 987–997 (GYTSDVSHLVV) are enriched in polar residues.

The protein belongs to the glutamate-gated ion channel (TC 1.A.10.1) family. As to quaternary structure, forms a heteromeric NMDA channel with Nmdar2.

The protein localises to the cell membrane. It is found in the postsynaptic cell membrane. Its subcellular location is the postsynaptic density. NMDA receptor subtype of glutamate-gated ion channels with high calcium permeability and voltage-dependent sensitivity to magnesium. Mediated by glycine. This protein plays a key role in synaptic plasticity, synaptogenesis, excitotoxicity, memory acquisition and learning. It mediates neuronal functions in glutamate neurotransmission. Is involved in the cell surface targeting of NMDA receptors. Plays a role in associative learning and in long-term memory consolidation. The protein is Glutamate [NMDA] receptor subunit 1 of Drosophila sechellia (Fruit fly).